The chain runs to 291 residues: MASKQLKLVIITGMSGAGKTVAMQSLEDLGYFCVDNLPPSLLPKFWELMKESDKMDKIALVMDLRGREFFDSIEPALDELDNTNFITTKILFLEADDKVLVSRYKETRRHHPLEPNGSVLDGINAERELLSDLKGRSQLVINTSNMAPRELRERINNEFQTEDKDVFNVQLMSFGFKYGIPIDADLVFDVRFLPNPHYIDKMRPLTGLDKDVYEYVMKWPETGAFLDKLIDLLMFTLPFYKREGKTQLVIAIGCTGGQHRSVALTEYVGKAIQQKYETTISHRDMKRRKGR.

13–20 is a binding site for ATP; sequence GMSGAGKT. 63-66 serves as a coordination point for GTP; the sequence is DLRG.

The protein belongs to the RapZ-like family.

In terms of biological role, displays ATPase and GTPase activities. This chain is Nucleotide-binding protein lwe2422, found in Listeria welshimeri serovar 6b (strain ATCC 35897 / DSM 20650 / CCUG 15529 / CIP 8149 / NCTC 11857 / SLCC 5334 / V8).